A 161-amino-acid polypeptide reads, in one-letter code: Disulfide bond formation protein B (161 aa).

The Cytoplasmic portion of the chain corresponds to Met-1–Tyr-8. A helical membrane pass occupies residues Phe-9 to Tyr-25. Over Met-26–Phe-43 the chain is Periplasmic. Cysteines 35 and 38 form a disulfide. Residues Ala-44–Ala-58 traverse the membrane as a helical segment. The Cytoplasmic portion of the chain corresponds to Gln-59–Thr-63. A helical transmembrane segment spans residues Leu-64 to Gly-81. Over Tyr-82–Ala-136 the chain is Periplasmic. Cys-94 and Cys-122 form a disulfide bridge. Residues Trp-137–Arg-155 form a helical membrane-spanning segment. Residues Arg-156–Arg-161 lie on the Cytoplasmic side of the membrane.

The protein belongs to the DsbB family.

The protein resides in the cell inner membrane. In terms of biological role, required for disulfide bond formation in some periplasmic proteins. Acts by oxidizing the DsbA protein. This is Disulfide bond formation protein B from Cupriavidus metallidurans (strain ATCC 43123 / DSM 2839 / NBRC 102507 / CH34) (Ralstonia metallidurans).